The sequence spans 245 residues: 7-cyano-7-deazaguanine synthase 2 (245 aa).

12–22 (FSGGQDSTTCL) contributes to the ATP binding site. 4 residues coordinate Zn(2+): C200, C215, C218, and C221.

It belongs to the QueC family. Zn(2+) serves as cofactor.

It catalyses the reaction 7-carboxy-7-deazaguanine + NH4(+) + ATP = 7-cyano-7-deazaguanine + ADP + phosphate + H2O + H(+). The protein operates within purine metabolism; 7-cyano-7-deazaguanine biosynthesis. In terms of biological role, catalyzes the ATP-dependent conversion of 7-carboxy-7-deazaguanine (CDG) to 7-cyano-7-deazaguanine (preQ(0)). In Mesorhizobium japonicum (strain LMG 29417 / CECT 9101 / MAFF 303099) (Mesorhizobium loti (strain MAFF 303099)), this protein is 7-cyano-7-deazaguanine synthase 2.